A 447-amino-acid polypeptide reads, in one-letter code: GTPase Der (447 aa).

2 consecutive EngA-type G domains span residues 4 to 165 (QIIT…PEEE) and 180 to 357 (LQIV…KIWN). GTP-binding positions include 10 to 17 (GRPNVGKS), 57 to 61 (DTPGL), 119 to 122 (NKCE), 186 to 193 (GRPNAGKS), 233 to 237 (DTAGL), and 298 to 301 (NKWD). Residues 358-443 (KKITTSKLNE…PIRFTYVKTK (86 aa)) form the KH-like domain.

The protein belongs to the TRAFAC class TrmE-Era-EngA-EngB-Septin-like GTPase superfamily. EngA (Der) GTPase family. In terms of assembly, associates with the 50S ribosomal subunit.

In terms of biological role, GTPase that plays an essential role in the late steps of ribosome biogenesis. The protein is GTPase Der of Rickettsia rickettsii (strain Iowa).